The primary structure comprises 298 residues: Quinolinate synthase (298 aa).

Residues His-19 and Ser-36 each contribute to the iminosuccinate site. Position 81 (Cys-81) interacts with [4Fe-4S] cluster. Iminosuccinate-binding positions include 107-109 and Ser-124; that span reads YVN. Position 168 (Cys-168) interacts with [4Fe-4S] cluster. Iminosuccinate is bound by residues 193–195 and Thr-210; that span reads HPE. Cys-254 is a [4Fe-4S] cluster binding site.

Belongs to the quinolinate synthase family. Type 2 subfamily. The cofactor is [4Fe-4S] cluster.

Its subcellular location is the cytoplasm. It catalyses the reaction iminosuccinate + dihydroxyacetone phosphate = quinolinate + phosphate + 2 H2O + H(+). It participates in cofactor biosynthesis; NAD(+) biosynthesis; quinolinate from iminoaspartate: step 1/1. Its activity is regulated as follows. Inhibited by 4,5 dithiohydroxyphthalic acid (DTHPA) analogs, which bind to the catalytic iron site of the [4Fe-4S] cluster. Its function is as follows. Catalyzes the condensation of iminoaspartate with dihydroxyacetone phosphate to form quinolinate. The polypeptide is Quinolinate synthase (Thermotoga maritima (strain ATCC 43589 / DSM 3109 / JCM 10099 / NBRC 100826 / MSB8)).